The sequence spans 273 residues: Short-chain dehydrogenase fogB (273 aa).

NADP(+) contacts are provided by Ile-16, Asp-66, Arg-128, Tyr-174, Lys-178, Val-207, and Thr-209. Catalysis depends on Tyr-174, which acts as the Proton donor. Catalysis depends on Lys-178, which acts as the Lowers pKa of active site Tyr.

This sequence belongs to the short-chain dehydrogenases/reductases (SDR) family.

Short-chain dehydrogenase; part of the gene cluster that mediates the biosynthesis of flavoglaucin and congeners (including aspergin, dihydroauroglaucin and auroglaucin), prenylated salicylaldehyde derivatives carrying a saturated or an unsaturated C-7 side chain. The PKS fogA releases the carboxylic acid (8E,10E,12E)-3,5,7-trihydroxytetradeca-8,10,12-trienoic acid as its product, as well as derivatives with one and two double bonds. FogA is indeed able to reduce the initial triketide, thus being at least partially responsible for the differently saturated heptyl side chains of flavoglaucin congeners. The oxidoreductases fogB, fogC and fogD modify the nascent polyketide in fogA-bound form and, together, fogA, fogB, fogC and fogD are necessary for the formation of the aromatic core and the cyclized PKS products are released as salicyl alcohols. In particular, fogB is responsible for oxidation of a hydroxyl group or reduction of remaining double bond(s) at the C-7 residue whereas fogD is probably involved in the reductive release of the modified PKS products. The cytochrome P450 monooxygenase fogE is then responsible for the hydroxylation at C-3 of the benzene ring. The fogE products are substrates of the prenyltransferase fogH and the prenylated benzyl alcohols are subsequently oxidized by the fogF to produce the final aryl aldehydes flavoglaucin and congeners. The short-chain dehydrogenase fogG does not seem to be involved in the biosynthesis of the prenylated salicylaldehyde derivatives. The polypeptide is Short-chain dehydrogenase fogB (Aspergillus ruber (strain CBS 135680)).